The chain runs to 172 residues: Ribosome maturation factor RimM (172 aa).

Residues 96 to 168 (DGEFYYHEII…RVQVELMEGL (73 aa)) form the PRC barrel domain.

This sequence belongs to the RimM family. As to quaternary structure, binds ribosomal protein uS19.

It localises to the cytoplasm. Functionally, an accessory protein needed during the final step in the assembly of 30S ribosomal subunit, possibly for assembly of the head region. Essential for efficient processing of 16S rRNA. May be needed both before and after RbfA during the maturation of 16S rRNA. It has affinity for free ribosomal 30S subunits but not for 70S ribosomes. In Streptococcus agalactiae serotype III (strain NEM316), this protein is Ribosome maturation factor RimM.